A 332-amino-acid chain; its full sequence is Trans-2'-carboxybenzalpyruvate hydratase-aldolase (332 aa).

Lys-178 (schiff-base intermediate with substrate) is an active-site residue.

It belongs to the DapA family. In terms of assembly, homotrimer.

It catalyses the reaction (3Z)-4-(2-carboxyphenyl)-2-oxobut-3-enoate + H2O = 2-formylbenzoate + pyruvate. Its activity is regulated as follows. Not inhibited by sodium borohydride or sodium pyruvate. Unaffected by EDTA, EGTA, Mn(2+), Mg(2+) and Ca(2+). Its function is as follows. Plays a role in phenanthrene catabolism. Catalyzes the transformation of trans-2'-carboxbenzalpyruvate to 2-formylbenzoate and pyruvate. In Nocardioides sp. (strain KP7), this protein is Trans-2'-carboxybenzalpyruvate hydratase-aldolase.